Reading from the N-terminus, the 313-residue chain is Ribosomal RNA small subunit methyltransferase H (313 aa).

Residues 35–37, Asp-55, Phe-79, Asp-100, and Gln-107 each bind S-adenosyl-L-methionine; that span reads GGH.

Belongs to the methyltransferase superfamily. RsmH family.

It localises to the cytoplasm. It catalyses the reaction cytidine(1402) in 16S rRNA + S-adenosyl-L-methionine = N(4)-methylcytidine(1402) in 16S rRNA + S-adenosyl-L-homocysteine + H(+). Its function is as follows. Specifically methylates the N4 position of cytidine in position 1402 (C1402) of 16S rRNA. The sequence is that of Ribosomal RNA small subunit methyltransferase H from Burkholderia multivorans (strain ATCC 17616 / 249).